We begin with the raw amino-acid sequence, 466 residues long: MAAAFSSTVGAPASTPTNFLGKKLKKQVTSAVNYHGKSSNINRFKVMAKELDEGKQTDQDRWKGLAYDISDDQQDITRGKGFVDSLFQAPTGDGTHEAVLSSYEYLSQGLRTYDFDNTMGGFYIAPAFMDKLVVHISKNFMTLPNIKVPLILGIWGGKGQGKSFQCELVFAKMGINPIMMSAGELESGNAGEPAKLIRQRYREAADIIKKGKMCCLFINDLDAGAGRMGGTTQYTVNNQMVNATLMNIADNPTNVQLPGMYNKEDNPRVPIIVTGNDFSTLYAPLIRDGRMEKFYWAPTRDDRVGVCKGIFRTDNVPDEDIVKIVDSFPGQSIDFFGALRARVYDDEVRKWVSDTGVENIGKRLVNSREGPPEFEQPKMTIEKLMEYGYMLVKEQENVKRVQLAEQYLSEAALGDANSDAMKTGSFYGQGAQQAGNLPVPEGCTDPVAKNFDPTARSDDGSCLYTF.

The N-terminal 48 residues, 1–48, are a transit peptide targeting the chloroplast; the sequence is MAAAFSSTVGAPASTPTNFLGKKLKKQVTSAVNYHGKSSNINRFKVMA. Position 156 to 163 (156 to 163) interacts with ATP; the sequence is GGKGQGKS. Positions 429–454 are disordered; that stretch reads QGAQQAGNLPVPEGCTDPVAKNFDPT.

This sequence belongs to the RuBisCO activase family.

Its subcellular location is the plastid. It localises to the chloroplast stroma. Activation of RuBisCO (ribulose-1,5-bisphosphate carboxylase/oxygenase; EC 4.1.1.39) involves the ATP-dependent carboxylation of the epsilon-amino group of lysine leading to a carbamate structure. The chain is Ribulose bisphosphate carboxylase/oxygenase activase, chloroplastic (RCA) from Oryza sativa subsp. japonica (Rice).